The sequence spans 458 residues: Transcription termination factor Rho (458 aa).

A disordered region spans residues 1–23 (MNTTNKESTAELNNTESNNNYNN). Residues 10-23 (AELNNTESNNNYNN) show a composition bias toward low complexity. The region spanning 78–153 (LIVGEGVLEV…LKVNRVNFED (76 aa)) is the Rho RNA-BD domain. ATP contacts are provided by residues 201–206 (GKGQRA), 213–218 (RTGKTV), and arginine 244.

This sequence belongs to the Rho family. As to quaternary structure, homohexamer. The homohexamer assembles into an open ring structure.

Facilitates transcription termination by a mechanism that involves Rho binding to the nascent RNA, activation of Rho's RNA-dependent ATPase activity, and release of the mRNA from the DNA template. This is Transcription termination factor Rho from Rickettsia conorii (strain ATCC VR-613 / Malish 7).